The sequence spans 367 residues: Protein-glutamate methylesterase/protein-glutamine glutaminase (367 aa).

The region spanning 6–123 (RVLVVDDSAF…SLGIKQLADE (118 aa)) is the Response regulatory domain. At D57 the chain carries 4-aspartylphosphate. One can recognise a CheB-type methylesterase domain in the interval 165–361 (ISKKEIVVVI…DILLKKVNEY (197 aa)). Catalysis depends on residues S177, H204, and D303.

This sequence belongs to the CheB family. Phosphorylated by CheA. Phosphorylation of the N-terminal regulatory domain activates the methylesterase activity.

Its subcellular location is the cytoplasm. The catalysed reaction is [protein]-L-glutamate 5-O-methyl ester + H2O = L-glutamyl-[protein] + methanol + H(+). It carries out the reaction L-glutaminyl-[protein] + H2O = L-glutamyl-[protein] + NH4(+). Its function is as follows. Involved in chemotaxis. Part of a chemotaxis signal transduction system that modulates chemotaxis in response to various stimuli. Catalyzes the demethylation of specific methylglutamate residues introduced into the chemoreceptors (methyl-accepting chemotaxis proteins or MCP) by CheR. Also mediates the irreversible deamidation of specific glutamine residues to glutamic acid. In Caldanaerobacter subterraneus subsp. tengcongensis (strain DSM 15242 / JCM 11007 / NBRC 100824 / MB4) (Thermoanaerobacter tengcongensis), this protein is Protein-glutamate methylesterase/protein-glutamine glutaminase.